The primary structure comprises 322 residues: Malate dehydrogenase (322 aa).

NAD(+)-binding positions include 10–15 and aspartate 34; that span reads GSGQIG. The substrate site is built by arginine 83 and arginine 89. NAD(+)-binding positions include asparagine 96 and 119-121; that span reads ITN. Asparagine 121 and arginine 152 together coordinate substrate. The Proton acceptor role is filled by histidine 176.

Belongs to the LDH/MDH superfamily. MDH type 3 family.

It carries out the reaction (S)-malate + NAD(+) = oxaloacetate + NADH + H(+). Catalyzes the reversible oxidation of malate to oxaloacetate. The chain is Malate dehydrogenase from Nitrobacter winogradskyi (strain ATCC 25391 / DSM 10237 / CIP 104748 / NCIMB 11846 / Nb-255).